The following is a 318-amino-acid chain: Pyrroline-5-carboxylate reductase ucsG (318 aa).

It belongs to the pyrroline-5-carboxylate reductase family.

The protein operates within mycotoxin biosynthesis. In terms of biological role, pyrroline-5-carboxylate reductase; part of the gene cluster that mediates the biosynthesis of UCS1025A, a member of the pyrrolizidinone family that acts as a strong telomerase inhibitor and displays potent antibacterial and antitumor properties. These compounds share a hemiaminal-containing pyrrolizidinone core fused with a gamma-lactone, giving a furopyrrolizidine that is connected to a decalin fragment. The polyketide synthase module (PKS) of the PKS-NRPS ucsA is responsible for the synthesis of the polyketide backbone via the condensation of an acetyl-CoA starter unit with 6 malonyl-CoA units. The downstream nonribosomal peptide synthetase (NRPS) module then amidates the carboxyl end of the polyketide with a 2S,3S-methylproline derived from L-isoleucine by the 2-oxoglutarate-dependent dioxygenase ucsF which converts L-isoleucine to (4S,5S)-4-methylpyrroline-5-carboxylate that is further converted to 2S,3S-methylproline by the pyrroline-5-carboxylate reductase ucsG. Reductive release of the completed aminoacyl polyketide from the assembly line can form the 3-pyrrolin-2-one structure via an intramolecular Knoevenagel reaction. Because ucsA lacks a designated enoylreductase (ER) domain, the required activity is provided the enoyl reductase ucsL. This keto acyclic precursor is the substrate of the Diels-Alderase ucsH, that catalyzes the Diels-Alder cycloaddition. Oxidation of the 3S-methyl group to a carboxylate by the cytochrome P450 monooxygenase ucsK allows an oxa-Michael cyclization that might involve the reductase/dehydrogenase ucsI and which furnishes the furopyrrolizidine. The oxidase ucsJ likely plays a critical role in stereoselective reduction of the C5-C6 double bond to afford the required R-configured carboxylate group. Further enolization and oxidation at C5 by an unidentified enzyme affords the last intermediate that can undergo oxa-Michael cyclization to yield UCS1025A. The protein is Pyrroline-5-carboxylate reductase ucsG of Acremonium sp.